The primary structure comprises 212 residues: Actin-depolymerizing factor 1, isoforms a/b (212 aa).

The ADF-H domain maps to 3–159; sequence SGVMVDPDVQ…SHKELLNNCP (157 aa).

This sequence belongs to the actin-binding proteins ADF family. Interacts with F-actin.

Its function is as follows. Depolymerizes growing actin filaments in muscle cells; required for the assembly of actin filaments into the functional contractile myofilament lattice of muscle. Competes with unc-87 for actin binding and inhibits the actin-bundling activity of unc-87. This is Actin-depolymerizing factor 1, isoforms a/b from Caenorhabditis elegans.